An 87-amino-acid polypeptide reads, in one-letter code: MQIKREAVCGTLQSNDCLVRIVPSEKLELDLKSSVLNEFGAQIKKTVQEVLDEFEVKNAKLFIEDKGALDCTIKARVETALRRANEK.

Residue serine 14 is modified to O-(phosphoribosyl dephospho-coenzyme A)serine.

The protein belongs to the CitD family. Oligomer with a subunit composition of (alpha,beta,gamma)6.

The protein localises to the cytoplasm. Its function is as follows. Covalent carrier of the coenzyme of citrate lyase. The sequence is that of Citrate lyase acyl carrier protein from Treponema denticola (strain ATCC 35405 / DSM 14222 / CIP 103919 / JCM 8153 / KCTC 15104).